A 349-amino-acid polypeptide reads, in one-letter code: MEEILKSFKISIDNEGYSKSFSLEDLDNFNNNNNNNNNNNNNEENNPYEFFERYGFLVIRNVISEEDCNKTVGEIFDIIESKVKTFDRNDQSTWDQTFSEDGSSIPQYGSPSKPPIFKKQFLMNRTNPNVYKVFSKLLKNQDLMVNHDRACFFRPTLVNPKWKTNDNVHLDMNPYNWMGNGDICREELSKLTYARLGEFIVENNQPTQNDGLQLQGVINLLDNQELDGGYCVTPGFHTIFNEYFTSKKPQYTSPSWNFDKKDIAFKYAKRISMRKGSIVVWNQQMPHGSMSNKSFNPRMAQFIKIFPTSTVNSVRYQHRKNQIKSIIENSDELKDFPLNQISSQLLGLN.

2-oxoglutarate contacts are provided by residues Lys-118 and 169–171 (HLD). Residues His-169 and Asp-171 each contribute to the Fe cation site.

Belongs to the PhyH family. Fe cation serves as cofactor. L-ascorbate is required as a cofactor.

The enzyme catalyses phytanoyl-CoA + 2-oxoglutarate + O2 = 2-hydroxyphytanoyl-CoA + succinate + CO2. It participates in lipid metabolism; fatty acid metabolism. Its function is as follows. Converts phytanoyl-CoA to 2-hydroxyphytanoyl-CoA. This chain is Putative phytanoyl-CoA dioxygenase, found in Dictyostelium discoideum (Social amoeba).